We begin with the raw amino-acid sequence, 162 residues long: Succinate dehydrogenase assembly factor 2, mitochondrial (162 aa).

A mitochondrion-targeting transit peptide spans 1-35 (MHNMFPALTKTLSLQGYKIINSQTGSAAWSCGRRW).

The protein belongs to the SDHAF2 family. In terms of assembly, interacts with the flavoprotein subunit within the SDH catalytic dimer.

The protein localises to the mitochondrion matrix. Plays an essential role in the assembly of succinate dehydrogenase (SDH), an enzyme complex (also referred to as respiratory complex II) that is a component of both the tricarboxylic acid (TCA) cycle and the mitochondrial electron transport chain, and which couples the oxidation of succinate to fumarate with the reduction of ubiquinone (coenzyme Q) to ubiquinol. Required for flavinylation (covalent attachment of FAD) of the flavoprotein subunit of the SDH catalytic dimer. The sequence is that of Succinate dehydrogenase assembly factor 2, mitochondrial from Saccharomyces cerevisiae (strain RM11-1a) (Baker's yeast).